We begin with the raw amino-acid sequence, 144 residues long: MAVSFRGLSLSAHSEGLSEVDKNSGEPENTYILRPIFQQRFRPSVVKDCIHTVLKEELASAEYSPDEMPQLTKRLSEMIKDKLKELGYDRYKMVVQVVIGEQRGEGVFMAARCFWDADTDNYTHDVFMNDSLFCVVAAFGCFYY.

The protein belongs to the dynein light chain Tctex-type family. As to quaternary structure, light chain of the cytoplasmic dynein complex 2, a multisubunit complex composed at least of eleven different proteins. The cytoplasmic dynein 2 complex consists of two catalytic heavy chains (HCs) and a number of non-catalytic subunits presented by intermediate chains (ICs), light intermediate chains (LICs) and light chains (LCs). Among them, a heavy chain (DYNC2H1), two intermediate chains (DYNC2I2 and DYNC2I1), a light intermediate chain (DYNC2LI1), and a light chain (DYNLT2B) are unique to the dynein-2 complex, but a subset of the light chains are also shared by dynein-1 and dynein-2 complexes. The dimer DYNLT2B-DYNLT1/DYNLT3 interacts with DYNC2I1; this interaction is crucial for retrograde trafficking of ciliary proteins.

The protein resides in the dynein axonemal particle. Acts as one of several non-catalytic accessory components of the cytoplasmic dynein 2 complex (dynein-2 complex), a motor protein complex that drives the movement of cargos along microtubules within cilia and flagella in concert with the intraflagellar transport (IFT) system. Required for proper retrograde ciliary transport. This is Dynein light chain Tctex-type protein 2B (Dynlt2b) from Mus musculus (Mouse).